A 341-amino-acid chain; its full sequence is MLHGHSPVSQALLGTFFTWGLTAAGAALVFVFSSGQRRILDGSLGFAAGVMLAASYWSLLAPAVEMAMSSGGFGSLAFLPVAIGFTLGAAFVYVADLLMPHWGAAEDPQTALALNLDPLLTKKSDAEGARMLFPESELSIRIGRAGLLSDKSENGEAYQRKRAVATDLAEGPAAPGPPRGSAAQPGGSSWRRIALLILAITIHNIPEGLAVGVGFGAVGKTASATFESARNLALGIGIQNFPEGLAVSLPLRGAGFSTWRAFWYGQLSGMVEPLAGVFGAFAVVLAEPILPYALAFAAGAMVYVIMDDIIPEAQISGNGKLASWASILGFVVMMSLDVGLG.

The next 7 membrane-spanning stretches (helical) occupy residues 12–32 (LLGT…VFVF), 44–64 (LGFA…APAV), 72–92 (GFGS…AAFV), 193–213 (IALL…AVGV), 262–284 (FWYG…FAVV), 289–306 (ILPY…YVIM), and 321–341 (LASW…VGLG).

This sequence belongs to the ZIP transporter (TC 2.A.5) family.

It is found in the cell membrane. It localises to the nucleus. The protein localises to the cytoplasm. The protein resides in the golgi apparatus. It carries out the reaction Zn(2+)(in) = Zn(2+)(out). It catalyses the reaction Cu(2+)(in) = Cu(2+)(out). Its function is as follows. Zinc importer that regulates cytosolic zinc concentrations either via zinc influx from the extracellular compartment or efflux from intracellular organelles such as Golgi apparatus. May transport copper ions as well. The transport mechanism remains to be elucidated. The polypeptide is Zinc transporter ZIP11 (SLC39A11) (Bos taurus (Bovine)).